We begin with the raw amino-acid sequence, 246 residues long: Cell division protein ZapD (246 aa).

This sequence belongs to the ZapD family. As to quaternary structure, interacts with FtsZ.

The protein localises to the cytoplasm. Its function is as follows. Cell division factor that enhances FtsZ-ring assembly. Directly interacts with FtsZ and promotes bundling of FtsZ protofilaments, with a reduction in FtsZ GTPase activity. This Vibrio cholerae serotype O1 (strain ATCC 39541 / Classical Ogawa 395 / O395) protein is Cell division protein ZapD.